We begin with the raw amino-acid sequence, 412 residues long: Multifunctional CCA protein (412 aa).

Positions 8 and 11 each coordinate ATP. 2 residues coordinate CTP: glycine 8 and arginine 11. Residues aspartate 21 and aspartate 23 each coordinate Mg(2+). Arginine 91, arginine 137, and arginine 140 together coordinate ATP. Positions 91, 137, and 140 each coordinate CTP. The region spanning 228 to 329 (TGIHTLMTLS…VKLFDSIDAW (102 aa)) is the HD domain.

Belongs to the tRNA nucleotidyltransferase/poly(A) polymerase family. Bacterial CCA-adding enzyme type 1 subfamily. In terms of assembly, monomer. Can also form homodimers and oligomers. Mg(2+) is required as a cofactor. Ni(2+) serves as cofactor.

The enzyme catalyses a tRNA precursor + 2 CTP + ATP = a tRNA with a 3' CCA end + 3 diphosphate. It catalyses the reaction a tRNA with a 3' CCA end + 2 CTP + ATP = a tRNA with a 3' CCACCA end + 3 diphosphate. Its function is as follows. Catalyzes the addition and repair of the essential 3'-terminal CCA sequence in tRNAs without using a nucleic acid template. Adds these three nucleotides in the order of C, C, and A to the tRNA nucleotide-73, using CTP and ATP as substrates and producing inorganic pyrophosphate. tRNA 3'-terminal CCA addition is required both for tRNA processing and repair. Also involved in tRNA surveillance by mediating tandem CCA addition to generate a CCACCA at the 3' terminus of unstable tRNAs. While stable tRNAs receive only 3'-terminal CCA, unstable tRNAs are marked with CCACCA and rapidly degraded. This is Multifunctional CCA protein from Shigella flexneri serotype 5b (strain 8401).